Consider the following 1333-residue polypeptide: Aldehyde oxidase 1 (1333 aa).

Residues 4–91 (PQLLFYVNGQ…GTAVTTVEGI (88 aa)) enclose the 2Fe-2S ferredoxin-type domain. [2Fe-2S] cluster-binding residues include cysteine 43, cysteine 48, cysteine 51, and cysteine 73. Position 112 (glutamine 112) interacts with Mo-molybdopterin. Positions 113, 116, 148, and 150 each coordinate [2Fe-2S] cluster. Cysteine 150 serves as a coordination point for Mo-molybdopterin. Residues 235-420 (FYSNRMTWIS…VSVNIPCSRK (186 aa)) enclose the FAD-binding PCMH-type domain. Residues 263–270 (IVMGYTSV), alanine 344, serine 353, histidine 357, aspartate 366, and leucine 410 contribute to the FAD site. Residues 801–802 (AF) and methionine 1042 each bind Mo-molybdopterin. Serine 1063 carries the phosphoserine modification. Residues 1083 to 1086 (GSVV), glutamine 1198, and leucine 1263 contribute to the Mo-molybdopterin site. Glutamate 1265 functions as the Proton acceptor; for azaheterocycle hydroxylase activity in the catalytic mechanism.

Belongs to the xanthine dehydrogenase family. As to quaternary structure, homodimer. The cofactor is [2Fe-2S] cluster. It depends on FAD as a cofactor. Mo-molybdopterin serves as cofactor. In terms of processing, the N-terminus is blocked. In terms of tissue distribution, expression in liver (at protein level). Also detected in heart, lung, spleen and kidney.

The protein localises to the cytoplasm. It carries out the reaction an aldehyde + O2 + H2O = a carboxylate + H2O2 + H(+). It catalyses the reaction retinal + O2 + H2O = retinoate + H2O2 + H(+). With respect to regulation, inhibited by menadione and isovanillin. Not inhibited by allopurinol, a xanthine dehydrogenase potent inhibitor. Inhibited by the flavonoids quercetin, myricetin and genistein. Nitric oxide generation is inhibited by raloxifene and competitively inhibited by an increase in oxygen levels. Functionally, oxidase with broad substrate specificity, oxidizing aromatic azaheterocycles, such as N1-methylnicotinamide, N-methylphthalazinium and phthalazine, as well as aldehydes, such as benzaldehyde, retinal, pyridoxal, and vanillin. Plays a role in the metabolism of xenobiotics and drugs containing aromatic azaheterocyclic substituents. Participates in the bioactivation of prodrugs such as famciclovir, catalyzing the oxidation step from 6-deoxypenciclovir to penciclovir, which is a potent antiviral agent. Is probably involved in the regulation of reactive oxygen species homeostasis. Is a prominent source of superoxide generation via the one-electron reduction of molecular oxygen. Also catalyzes nitric oxide (NO) production; under anaerobic conditions, reduces nitrite to NO with NADH or aldehyde as electron donor, but under aerobic conditions, NADH is the preferred substrate. These reactions may be catalyzed by several isozymes. May play a role in adipogenesis. This is Aldehyde oxidase 1 from Rattus norvegicus (Rat).